We begin with the raw amino-acid sequence, 328 residues long: Malate dehydrogenase (328 aa).

12–18 (GAAGQIG) serves as a coordination point for NAD(+). Arg95 and Arg101 together coordinate substrate. Residues Asn108, Gln115, and 132–134 (VGN) each bind NAD(+). Residues Asn134 and Arg165 each contribute to the substrate site. The Proton acceptor role is filled by His190.

This sequence belongs to the LDH/MDH superfamily. MDH type 2 family.

It catalyses the reaction (S)-malate + NAD(+) = oxaloacetate + NADH + H(+). Functionally, catalyzes the reversible oxidation of malate to oxaloacetate. In Polaromonas naphthalenivorans (strain CJ2), this protein is Malate dehydrogenase.